Reading from the N-terminus, the 313-residue chain is Undecaprenyl-diphosphatase (313 aa).

Helical transmembrane passes span 121 to 141 (YRIGWYVIIATIPIGVLGFLF), 152 to 172 (LWLVSFMLIAFALVIAAAEHY), 187 to 207 (GLVMGFAQCLALIPGVSRSGA), 225 to 245 (FSFLLAIPAVTASGLFSLPDA), 259 to 279 (QLLVATIVSFVVGYASVAWLL), and 290 to 310 (FVGYRIVLGLVIMGLLGAGVI).

This sequence belongs to the UppP family.

It is found in the cell membrane. The catalysed reaction is di-trans,octa-cis-undecaprenyl diphosphate + H2O = di-trans,octa-cis-undecaprenyl phosphate + phosphate + H(+). Its function is as follows. Catalyzes the dephosphorylation of undecaprenyl diphosphate (UPP). Confers resistance to bacitracin. This chain is Undecaprenyl-diphosphatase, found in Nocardia farcinica (strain IFM 10152).